Reading from the N-terminus, the 138-residue chain is Ribosome-binding factor A (138 aa).

A disordered region spans residues 116–138 (VAQDSQHQEGPASPDAKPESTEE).

Belongs to the RbfA family. In terms of assembly, monomer. Binds 30S ribosomal subunits, but not 50S ribosomal subunits or 70S ribosomes.

Its subcellular location is the cytoplasm. Functionally, one of several proteins that assist in the late maturation steps of the functional core of the 30S ribosomal subunit. Associates with free 30S ribosomal subunits (but not with 30S subunits that are part of 70S ribosomes or polysomes). Required for efficient processing of 16S rRNA. May interact with the 5'-terminal helix region of 16S rRNA. This chain is Ribosome-binding factor A, found in Pseudomonas syringae pv. tomato (strain ATCC BAA-871 / DC3000).